The primary structure comprises 401 residues: MPKVVLAYSGGLDTSVIIAWLKENYGYEVIAVTADLGQGEELAPLEEKALQSGASKIYIEDLRKEFVEDYIWPTLKAGAIYEGKYLLGTSFARPLIAKKLVEIAEKEGAVAVAHGATGKGNDQVRFELGVKALAPHLKVIAPWREWDIRSREDAIDYAEARGIPVPVTKKSIYSRDRNIWHISHEGGELESPANAASYDMLMLTVPPEKAPDQPTYVEIGFEKGIPVSINGELMDSIGLLEKLNVIGGENGIGIVDMVENRLVGMKSRGVYETPGGAILVYAHRELELLTLDRATLHYKEQIALRYAELVYDGVWFAPLREALDAFVDNTQRTVTGTVKLKLYKGNMMPAGVTSPYSLYDEELSTFGRDEVYNQADAAGFINLFGLPLKVRAMMEKKAGLR.

ATP is bound by residues 7–15 and A34; that span reads AYSGGLDTS. Y85 and S90 together coordinate L-citrulline. G115 contributes to the ATP binding site. Positions 117, 121, and 122 each coordinate L-aspartate. N121 is an L-citrulline binding site. L-citrulline contacts are provided by R125, S174, S183, E259, and Y271.

Belongs to the argininosuccinate synthase family. Type 1 subfamily. As to quaternary structure, homotetramer.

Its subcellular location is the cytoplasm. It catalyses the reaction L-citrulline + L-aspartate + ATP = 2-(N(omega)-L-arginino)succinate + AMP + diphosphate + H(+). It participates in amino-acid biosynthesis; L-arginine biosynthesis; L-arginine from L-ornithine and carbamoyl phosphate: step 2/3. This chain is Argininosuccinate synthase, found in Desulforamulus reducens (strain ATCC BAA-1160 / DSM 100696 / MI-1) (Desulfotomaculum reducens).